The sequence spans 275 residues: Diaminopimelate epimerase (275 aa).

3 residues coordinate substrate: Asn-12, Gln-45, and Asn-65. Cys-74 acts as the Proton donor in catalysis. Residues 75–76, Asn-158, Asn-191, and 209–210 each bind substrate; these read GN and ER. The Proton acceptor role is filled by Cys-218. Residue 219–220 participates in substrate binding; the sequence is GT.

This sequence belongs to the diaminopimelate epimerase family. As to quaternary structure, homodimer.

The protein resides in the cytoplasm. The enzyme catalyses (2S,6S)-2,6-diaminopimelate = meso-2,6-diaminopimelate. Its pathway is amino-acid biosynthesis; L-lysine biosynthesis via DAP pathway; DL-2,6-diaminopimelate from LL-2,6-diaminopimelate: step 1/1. Its function is as follows. Catalyzes the stereoinversion of LL-2,6-diaminopimelate (L,L-DAP) to meso-diaminopimelate (meso-DAP), a precursor of L-lysine and an essential component of the bacterial peptidoglycan. The chain is Diaminopimelate epimerase from Shewanella oneidensis (strain ATCC 700550 / JCM 31522 / CIP 106686 / LMG 19005 / NCIMB 14063 / MR-1).